A 312-amino-acid polypeptide reads, in one-letter code: Tetraacyldisaccharide 4'-kinase (312 aa).

Position 60-67 (60-67 (IAGGSGKT)) interacts with ATP.

This sequence belongs to the LpxK family.

It catalyses the reaction a lipid A disaccharide + ATP = a lipid IVA + ADP + H(+). The protein operates within glycolipid biosynthesis; lipid IV(A) biosynthesis; lipid IV(A) from (3R)-3-hydroxytetradecanoyl-[acyl-carrier-protein] and UDP-N-acetyl-alpha-D-glucosamine: step 6/6. In terms of biological role, transfers the gamma-phosphate of ATP to the 4'-position of a tetraacyldisaccharide 1-phosphate intermediate (termed DS-1-P) to form tetraacyldisaccharide 1,4'-bis-phosphate (lipid IVA). The chain is Tetraacyldisaccharide 4'-kinase from Helicobacter pylori (strain ATCC 700392 / 26695) (Campylobacter pylori).